An 886-amino-acid chain; its full sequence is MSQRGLEALLRPKSIAVIGASMKPNRAGYLMMRNLLAGGFNGPVLPVTPAWKAVLGVLAWPDIASLPFTPDLAVLCTNASRNLALLEELGEKGCKTCIILSAPASQHEDLRACALRHNMRLLGPNSLGLLAPWQGLNASFSPVPIKRGKLAFISQSAAVSNTILDWAQQRKMGFSYFIALGDSLDIDVDELLDYLARDSKTSAILLYLEQLSDARRFVSAARSASRNKPILVIKSGRSPAAQRLLNTTAGMDPAWDAAIQRAGLLRVQDTHELFSAVETLSHMRPLRGDRLMIISNGAAPAALALDALWSRNGKLATLSEETCQKLRDALPEHVAISNPLDLRDDASSEHYIKTLDILLHSQDFDALMVIHSPSAAAPATESAQVLIEAVKHHPRSKYVSLLTNWCGEHSSQEARRLFSEAGLPTYRTPEGTITAFMHMVEYRRNQKQLRETPALPSNLTSNTAEAHLLLQQAIAEGATSLDTHEVQPILQAYGMNTLPTWIASDSTEAVHIAEQIGYPVALKLRSPDIPHKSEVQGVMLYLRTANEVQQAANAIFDRVKMAWPQARVHGLLVQSMANRAGAQELRVVVEHDPVFGPLIMLGEGGVEWRPEDQAVVALPPLNMNLARYLVIQGIKSKKIRARSALRPLDVAGLSQLLVQVSNLIVDCPEIQRLDIHPLLASGSEFTALDVTLDISPFEGDNESRLAVRPYPHQLEEWVELKNGERCLFRPILPEDEPQLQQFISRVTKEDLYYRYFSEINEFTHEDLANMTQIDYDREMAFVAVRRIDQTEEILGVTRAISDPDNIDAEFAVLVRSDLKGLGLGRRLMEKLITYTRDHGLQRLNGITMPNNRGMVALARKLGFNVDIQLEEGIVGLTLNLAQREES.

The 37-residue stretch at 487–523 folds into the ATP-grasp domain; it reads QPILQAYGMNTLPTWIASDSTEAVHIAEQIGYPVALK. The N-acetyltransferase domain maps to 726 to 881; the sequence is CLFRPILPED…GIVGLTLNLA (156 aa).

The protein in the N-terminal section; belongs to the acetate CoA ligase alpha subunit family. In the central section; belongs to the acetate CoA ligase beta subunit family. Stable tetramer in solution. Oligomerizes to an octameric form by autoacetylation. Autoacetylated. Deacetylated by CobB.

The catalysed reaction is L-lysyl-[protein] + acetyl-CoA = N(6)-acetyl-L-lysyl-[protein] + CoA + H(+). In terms of biological role, catalyzes the acetyl-CoA-dependent acetylation of lysine residues of a large number of target proteins. Acetylates RNase R in exponential phase cells and RNase II. Required for the glucose-dependent acetylation on multiple lysines of alpha, beta and beta' RNAP subunits. Also acetylates acetyl-coenzyme A synthetase (Acs) and the chromosomal replication initiator protein DnaA, and inhibits their activity. Overexpression leads to the acetylation of a large number of additional proteins and inhibits motility. This Escherichia coli (strain K12) protein is Peptidyl-lysine N-acetyltransferase PatZ.